A 226-amino-acid chain; its full sequence is ATP synthase subunit a (226 aa).

Transmembrane regions (helical) follow at residues 22–42 (SMNW…FWLI), 73–93 (IIIF…SLIP), 102–122 (LLLN…YLIY), 135–155 (LNSP…SLII), 173–193 (LILT…PINL), and 202–222 (LEIF…ILYF).

The protein belongs to the ATPase A chain family. As to quaternary structure, F-type ATPases have 2 components, CF(1) - the catalytic core - and CF(0) - the membrane proton channel. CF(1) has five subunits: alpha(3), beta(3), gamma(1), delta(1), epsilon(1). CF(0) has three main subunits: a, b and c.

Its subcellular location is the mitochondrion inner membrane. Its function is as follows. Mitochondrial membrane ATP synthase (F(1)F(0) ATP synthase or Complex V) produces ATP from ADP in the presence of a proton gradient across the membrane which is generated by electron transport complexes of the respiratory chain. F-type ATPases consist of two structural domains, F(1) - containing the extramembraneous catalytic core and F(0) - containing the membrane proton channel, linked together by a central stalk and a peripheral stalk. During catalysis, ATP synthesis in the catalytic domain of F(1) is coupled via a rotary mechanism of the central stalk subunits to proton translocation. Key component of the proton channel; it may play a direct role in the translocation of protons across the membrane. This Apis mellifera ligustica (Common honeybee) protein is ATP synthase subunit a (ATP6).